The chain runs to 165 residues: Shikimate kinase (165 aa).

11 to 16 (GAGKTT) is a binding site for ATP. Thr-15 serves as a coordination point for Mg(2+). Substrate-binding residues include Asp-33, Arg-57, and Gly-78. Arg-116 serves as a coordination point for ATP. Arg-134 is a substrate binding site.

Belongs to the shikimate kinase family. In terms of assembly, monomer. The cofactor is Mg(2+).

The protein localises to the cytoplasm. It catalyses the reaction shikimate + ATP = 3-phosphoshikimate + ADP + H(+). It functions in the pathway metabolic intermediate biosynthesis; chorismate biosynthesis; chorismate from D-erythrose 4-phosphate and phosphoenolpyruvate: step 5/7. In terms of biological role, catalyzes the specific phosphorylation of the 3-hydroxyl group of shikimic acid using ATP as a cosubstrate. This Bacillus cereus (strain G9842) protein is Shikimate kinase.